The chain runs to 116 residues: Large ribosomal subunit protein bL20 (116 aa).

This sequence belongs to the bacterial ribosomal protein bL20 family.

In terms of biological role, binds directly to 23S ribosomal RNA and is necessary for the in vitro assembly process of the 50S ribosomal subunit. It is not involved in the protein synthesizing functions of that subunit. The protein is Large ribosomal subunit protein bL20 of Desulforapulum autotrophicum (strain ATCC 43914 / DSM 3382 / VKM B-1955 / HRM2) (Desulfobacterium autotrophicum).